A 266-amino-acid chain; its full sequence is Cytochrome c oxidase assembly factor 7 homolog (266 aa).

Sel1-like repeat units follow at residues 32 to 64 and 66 to 104; these read PEAC…DDYG and AKSC…NLND. A compositionally biased stretch (low complexity) spans 166–179; the sequence is AVTASSGSGTSSPP. Positions 166-187 are disordered; that stretch reads AVTASSGSGTSSPPAGQPPLKD. The Sel1-like 3 repeat unit spans residues 212-247; sequence MYACANLSQMYARGDGIEKNEKEAEKYKKLALEMQD.

It belongs to the hcp beta-lactamase family.

Its function is as follows. Required for locomotion. Probably involved in the regulation of formation/maintenance of motor neurons at presynaptic terminals at the neuromuscular junction. In Drosophila melanogaster (Fruit fly), this protein is Cytochrome c oxidase assembly factor 7 homolog.